The following is a 79-amino-acid chain: Putative membrane protein insertion efficiency factor (79 aa).

It belongs to the UPF0161 family.

It is found in the cell inner membrane. Its function is as follows. Could be involved in insertion of integral membrane proteins into the membrane. This chain is Putative membrane protein insertion efficiency factor, found in Prochlorococcus marinus (strain SARG / CCMP1375 / SS120).